Reading from the N-terminus, the 89-residue chain is Small ribosomal subunit protein uS15 (89 aa).

It belongs to the universal ribosomal protein uS15 family. As to quaternary structure, part of the 30S ribosomal subunit. Forms a bridge to the 50S subunit in the 70S ribosome, contacting the 23S rRNA.

Its function is as follows. One of the primary rRNA binding proteins, it binds directly to 16S rRNA where it helps nucleate assembly of the platform of the 30S subunit by binding and bridging several RNA helices of the 16S rRNA. Functionally, forms an intersubunit bridge (bridge B4) with the 23S rRNA of the 50S subunit in the ribosome. This Thermomicrobium roseum (strain ATCC 27502 / DSM 5159 / P-2) protein is Small ribosomal subunit protein uS15.